We begin with the raw amino-acid sequence, 207 residues long: Dephospho-CoA kinase (207 aa).

One can recognise a DPCK domain in the interval 8-207; it reads AIALTGSIGS…LPCVDCVQSS (200 aa). 16–21 contributes to the ATP binding site; sequence GSGKST.

This sequence belongs to the CoaE family.

The protein localises to the cytoplasm. It carries out the reaction 3'-dephospho-CoA + ATP = ADP + CoA + H(+). It functions in the pathway cofactor biosynthesis; coenzyme A biosynthesis; CoA from (R)-pantothenate: step 5/5. Catalyzes the phosphorylation of the 3'-hydroxyl group of dephosphocoenzyme A to form coenzyme A. The chain is Dephospho-CoA kinase from Helicobacter hepaticus (strain ATCC 51449 / 3B1).